A 158-amino-acid polypeptide reads, in one-letter code: Low molecular weight phosphotyrosine protein phosphatase (158 aa).

At Ala-2 the chain carries N-acetylalanine. The active-site Nucleophile is Cys-13. Residue Arg-19 is part of the active site. The active-site Proton donor is the Asp-130. A phosphotyrosine mark is found at Tyr-132 and Tyr-133.

Belongs to the low molecular weight phosphotyrosine protein phosphatase family. As to quaternary structure, interacts with EPHA2; dephosphorylates EPHA2. Interacts with EPHB1. Interacts with the SH3 domain of SPTAN1. There is no interaction observed for isoform 2. In terms of processing, phosphorylated by LCK. Phosphorylation at Tyr-132 increases its phosphatase activity. As to expression, widely expressed with highest levels in brain and liver and lowest levels in muscle.

The protein resides in the cytoplasm. It carries out the reaction O-phospho-L-tyrosyl-[protein] + H2O = L-tyrosyl-[protein] + phosphate. The enzyme catalyses a phosphate monoester + H2O = an alcohol + phosphate. Its activity is regulated as follows. Inhibited by sulfhydryl reagents. Its function is as follows. Acts on tyrosine phosphorylated proteins, low-MW aryl phosphates and natural and synthetic acyl phosphates with differences in substrate specificity between isoform 1 and isoform 2. In Mus musculus (Mouse), this protein is Low molecular weight phosphotyrosine protein phosphatase.